A 333-amino-acid polypeptide reads, in one-letter code: MNQTLIQEILEVVEQAAIASAKLTGLGQKDEADAAAVEAMRLRMGKIEMKGKIVIGEGERDEAPMLYIGEEVGSGSGPGVDFAVDPCEGTNLCANNQRGSMAVLAASDTGGLFNAPDFYMNKLAAPPAAKGKVDIRNSATENLKILSDCLDLSIDELTVVVMDRTRHKDLIKEIRGCGAKVQPISDGDVQAAIACGFAGTGTHCLMGIGAAPEGVISAAAMRALGGHFQGQLVYDPAIAQTSEWADYTKEGNIKRLNEMGITDIDKIYEANELASGENVVFAGSGITDGLLFDGVKFERDCVRTSSLVISTLDSTARFTNTVHIKDGAKSISL.

Mn(2+)-binding residues include aspartate 33, glutamate 57, aspartate 85, and glutamate 88. Residues 88-90 (EGT), tyrosine 119, 164-166 (RTR), and 186-188 (DGD) each bind substrate. Mn(2+) is bound at residue glutamate 213.

The protein belongs to the FBPase class 2 family. As to quaternary structure, homotetramer. Mn(2+) serves as cofactor.

It catalyses the reaction beta-D-fructose 1,6-bisphosphate + H2O = beta-D-fructose 6-phosphate + phosphate. It carries out the reaction D-sedoheptulose 1,7-bisphosphate + H2O = D-sedoheptulose 7-phosphate + phosphate. Its pathway is carbohydrate biosynthesis; Calvin cycle. In terms of biological role, catalyzes the hydrolysis of fructose 1,6-bisphosphate (Fru 1,6-P2) and sedoheptulose 1,7-bisphosphate (Sed 1,7-P2) to fructose 6-phosphate and sedoheptulose 7-phosphate, respectively. This chain is D-fructose 1,6-bisphosphatase class 2/sedoheptulose 1,7-bisphosphatase, found in Prochlorococcus marinus (strain MIT 9312).